Reading from the N-terminus, the 930-residue chain is uncharacterized protein (930 aa).

Positions 434–441 (IRRGISRK) match the Nuclear localization signal motif.

It localises to the nucleus. This is an uncharacterized protein from Chaetomium thermophilum (strain DSM 1495 / CBS 144.50 / IMI 039719) (Thermochaetoides thermophila).